We begin with the raw amino-acid sequence, 556 residues long: Formate--tetrahydrofolate ligase (556 aa).

Residue 65 to 72 (TPAGEGKS) coordinates ATP.

Belongs to the formate--tetrahydrofolate ligase family.

It carries out the reaction (6S)-5,6,7,8-tetrahydrofolate + formate + ATP = (6R)-10-formyltetrahydrofolate + ADP + phosphate. Its pathway is one-carbon metabolism; tetrahydrofolate interconversion. The polypeptide is Formate--tetrahydrofolate ligase (Natranaerobius thermophilus (strain ATCC BAA-1301 / DSM 18059 / JW/NM-WN-LF)).